We begin with the raw amino-acid sequence, 310 residues long: ADP-L-glycero-D-manno-heptose-6-epimerase (310 aa).

Residues 10-11 (FI), 31-32 (DN), lysine 38, lysine 53, 75-79 (EGACS), and asparagine 92 each bind NADP(+). Tyrosine 140 (proton acceptor) is an active-site residue. Lysine 144 contacts NADP(+). Asparagine 169 serves as a coordination point for substrate. NADP(+) contacts are provided by valine 170 and lysine 178. The active-site Proton acceptor is the lysine 178. Substrate-binding positions include serine 180, histidine 187, 201–204 (FEGS), and arginine 209. Position 267 is an N6-acetyllysine (lysine 267). Residue tyrosine 272 participates in substrate binding.

This sequence belongs to the NAD(P)-dependent epimerase/dehydratase family. HldD subfamily. In terms of assembly, homopentamer. It depends on NADP(+) as a cofactor.

It carries out the reaction ADP-D-glycero-beta-D-manno-heptose = ADP-L-glycero-beta-D-manno-heptose. The protein operates within nucleotide-sugar biosynthesis; ADP-L-glycero-beta-D-manno-heptose biosynthesis; ADP-L-glycero-beta-D-manno-heptose from D-glycero-beta-D-manno-heptose 7-phosphate: step 4/4. Catalyzes the interconversion between ADP-D-glycero-beta-D-manno-heptose and ADP-L-glycero-beta-D-manno-heptose via an epimerization at carbon 6 of the heptose. This is ADP-L-glycero-D-manno-heptose-6-epimerase from Escherichia coli (strain SMS-3-5 / SECEC).